We begin with the raw amino-acid sequence, 243 residues long: ADP-ribosylation factor-like protein 10 (243 aa).

GTP is bound by residues 83–90 (GLDGSGKS), 127–131 (EIGGS), and 184–187 (NKQD).

It belongs to the small GTPase superfamily. Arf family.

The chain is ADP-ribosylation factor-like protein 10 (Arl10) from Mus musculus (Mouse).